The primary structure comprises 191 residues: Putative glutathione-dependent formaldehyde-activating enzyme (191 aa).

Positions 20–166 (FSGGTLRCHC…FKSVGLETYD (147 aa)) constitute a CENP-V/GFA domain. Zn(2+) contacts are provided by cysteine 27, cysteine 29, cysteine 48, cysteine 50, cysteine 53, cysteine 95, and cysteine 98.

This sequence belongs to the Gfa family. The cofactor is Zn(2+).

The catalysed reaction is S-(hydroxymethyl)glutathione = glutathione + formaldehyde. The protein operates within one-carbon metabolism; formaldehyde degradation; formate from formaldehyde (glutathione route): step 1/3. Functionally, catalyzes the condensation of formaldehyde and glutathione to S-hydroxymethylglutathione. The chain is Putative glutathione-dependent formaldehyde-activating enzyme from Colletotrichum graminicola (strain M1.001 / M2 / FGSC 10212) (Maize anthracnose fungus).